The chain runs to 309 residues: MDILTTILNLLLPPLTIIFLFLFYPFYLLIKLVLCLRKNLHFENVARKVVLITGASSGIGEHVAYEYAKKGAYLALVARRRDRLEIVAETSRQLGSGNVIIIPGDVSNVEDCKKFIDETIRHFGKLDHLINNAGVFQTVLFEDFTQIQDANPIMDINFWGTTYITYFAIPHLRKSKGKIVAITSGSANIPLPLASIYAASKAALLRFFETLRIELSPDIKITIVLPGVVSTDMTTPHCIEKYGSDFILSESVSKCAKAIFRGIGRGETYIEEPSWMKWLFIMKNVCPEIVDYGLNYLFVSYLKPYFKRD.

Residues 10-30 (LLLPPLTIIFLFLFYPFYLLI) form a helical; Signal-anchor for type II membrane protein membrane-spanning segment. Residues 54–80 (GASSGIGEHVAYEYAKKGAYLALVARR) and D105 contribute to the NADP(+) site. S184 provides a ligand contact to substrate. Residue Y197 is the Proton acceptor of the active site. NADP(+)-binding positions include 197 to 201 (YAASK) and K201.

The protein belongs to the short-chain dehydrogenases/reductases (SDR) family.

It localises to the membrane. This is 11-beta-hydroxysteroid dehydrogenase-like 3 (HSD3) from Arabidopsis thaliana (Mouse-ear cress).